Consider the following 107-residue polypeptide: Large ribosomal subunit protein eL33 (107 aa).

Belongs to the eukaryotic ribosomal protein eL33 family. In terms of assembly, component of the large ribosomal subunit. Mature ribosomes consist of a small (40S) and a large (60S) subunit. The 40S subunit contains about 32 different proteins and 1 molecule of RNA (18S). The 60S subunit contains 45 different proteins and 3 molecules of RNA (25S, 5.8S and 5S).

The protein resides in the cytoplasm. In terms of biological role, component of the ribosome, a large ribonucleoprotein complex responsible for the synthesis of proteins in the cell. The small ribosomal subunit (SSU) binds messenger RNAs (mRNAs) and translates the encoded message by selecting cognate aminoacyl-transfer RNA (tRNA) molecules. The large subunit (LSU) contains the ribosomal catalytic site termed the peptidyl transferase center (PTC), which catalyzes the formation of peptide bonds, thereby polymerizing the amino acids delivered by tRNAs into a polypeptide chain. The nascent polypeptides leave the ribosome through a tunnel in the LSU and interact with protein factors that function in enzymatic processing, targeting, and the membrane insertion of nascent chains at the exit of the ribosomal tunnel. In Candida albicans (strain SC5314 / ATCC MYA-2876) (Yeast), this protein is Large ribosomal subunit protein eL33.